The chain runs to 494 residues: Glycerol kinase (494 aa).

Threonine 13 contacts ADP. ATP is bound by residues threonine 13, threonine 14, and serine 15. Threonine 13 lines the sn-glycerol 3-phosphate pocket. ADP is bound at residue arginine 17. Residues arginine 83, glutamate 84, tyrosine 135, and aspartate 244 each coordinate sn-glycerol 3-phosphate. Residues arginine 83, glutamate 84, tyrosine 135, aspartate 244, and glutamine 245 each coordinate glycerol. The ADP site is built by threonine 266 and glycine 309. Residues threonine 266, glycine 309, glutamine 313, and glycine 410 each contribute to the ATP site. The ADP site is built by glycine 410 and asparagine 414.

The protein belongs to the FGGY kinase family.

It carries out the reaction glycerol + ATP = sn-glycerol 3-phosphate + ADP + H(+). It participates in polyol metabolism; glycerol degradation via glycerol kinase pathway; sn-glycerol 3-phosphate from glycerol: step 1/1. With respect to regulation, inhibited by fructose 1,6-bisphosphate (FBP). Its function is as follows. Key enzyme in the regulation of glycerol uptake and metabolism. Catalyzes the phosphorylation of glycerol to yield sn-glycerol 3-phosphate. This Shewanella baltica (strain OS223) protein is Glycerol kinase.